A 257-amino-acid chain; its full sequence is 3-deoxy-manno-octulosonate cytidylyltransferase (257 aa).

The protein belongs to the KdsB family.

It is found in the cytoplasm. The catalysed reaction is 3-deoxy-alpha-D-manno-oct-2-ulosonate + CTP = CMP-3-deoxy-beta-D-manno-octulosonate + diphosphate. It functions in the pathway nucleotide-sugar biosynthesis; CMP-3-deoxy-D-manno-octulosonate biosynthesis; CMP-3-deoxy-D-manno-octulosonate from 3-deoxy-D-manno-octulosonate and CTP: step 1/1. The protein operates within bacterial outer membrane biogenesis; lipopolysaccharide biosynthesis. Its function is as follows. Activates KDO (a required 8-carbon sugar) for incorporation into bacterial lipopolysaccharide in Gram-negative bacteria. This Stenotrophomonas maltophilia (strain R551-3) protein is 3-deoxy-manno-octulosonate cytidylyltransferase.